The sequence spans 365 residues: tRNA/tmRNA (uracil-C(5))-methyltransferase (365 aa).

Q188, Y216, N221, E237, and D297 together coordinate S-adenosyl-L-methionine. Residue C322 is the Nucleophile of the active site. E356 (proton acceptor) is an active-site residue.

The protein belongs to the class I-like SAM-binding methyltransferase superfamily. RNA M5U methyltransferase family. TrmA subfamily.

The enzyme catalyses uridine(54) in tRNA + S-adenosyl-L-methionine = 5-methyluridine(54) in tRNA + S-adenosyl-L-homocysteine + H(+). It carries out the reaction uridine(341) in tmRNA + S-adenosyl-L-methionine = 5-methyluridine(341) in tmRNA + S-adenosyl-L-homocysteine + H(+). Dual-specificity methyltransferase that catalyzes the formation of 5-methyluridine at position 54 (m5U54) in all tRNAs, and that of position 341 (m5U341) in tmRNA (transfer-mRNA). This is tRNA/tmRNA (uracil-C(5))-methyltransferase from Aggregatibacter aphrophilus (strain NJ8700) (Haemophilus aphrophilus).